We begin with the raw amino-acid sequence, 550 residues long: Hydroxylamine reductase (550 aa).

The [2Fe-2S] cluster site is built by cysteine 3, cysteine 6, cysteine 18, and cysteine 25. Histidine 249, glutamate 273, cysteine 317, cysteine 405, cysteine 433, cysteine 458, glutamate 492, and lysine 494 together coordinate hybrid [4Fe-2O-2S] cluster. A Cysteine persulfide modification is found at cysteine 405.

Belongs to the HCP family. The cofactor is [2Fe-2S] cluster. It depends on hybrid [4Fe-2O-2S] cluster as a cofactor.

It localises to the cytoplasm. The catalysed reaction is A + NH4(+) + H2O = hydroxylamine + AH2 + H(+). Functionally, catalyzes the reduction of hydroxylamine to form NH(3) and H(2)O. This is Hydroxylamine reductase from Escherichia coli O17:K52:H18 (strain UMN026 / ExPEC).